The chain runs to 324 residues: Serpentine receptor class gamma-10 (324 aa).

The next 8 membrane-spanning stretches (helical) occupy residues 39-59, 69-89, 91-111, 128-146, 155-175, 206-226, 246-266, and 279-299; these read SSYL…VFHG, MLYC…VIFG, IFIY…TPSI, TFSQ…IFLM, ILKP…WKIL, LFHF…TILG, MIMA…VFFA, and IVSF…IVMS.

This sequence belongs to the nematode receptor-like protein srg family.

It localises to the membrane. The protein is Serpentine receptor class gamma-10 (srg-10) of Caenorhabditis elegans.